Consider the following 154-residue polypeptide: MSNKKEIVVTDWIKQNCHEGNFLNLTLSSDQRRVFRGKRKSDCNQELQLQLPREGKLNDGDILLTNQKKLFVQIIAQKENLIKITAKTSIELIKVAYHLGNRHVEIEINENILFTKSDYIIEELLRNFDVVYSKVEKKFFPEIGAFHHEKKSLS.

This sequence belongs to the UreE family.

The protein localises to the cytoplasm. Functionally, involved in urease metallocenter assembly. Binds nickel. Probably functions as a nickel donor during metallocenter assembly. This chain is Urease accessory protein UreE, found in Prochlorococcus marinus subsp. pastoris (strain CCMP1986 / NIES-2087 / MED4).